A 210-amino-acid polypeptide reads, in one-letter code: Ion-translocating oxidoreductase complex subunit G (210 aa).

The chain crosses the membrane as a helical span at residues 9-29 (SLVLALFAIAATALVTITYAL). Thr-176 bears the FMN phosphoryl threonine mark.

It belongs to the RnfG family. The complex is composed of six subunits: RnfA, RnfB, RnfC, RnfD, RnfE and RnfG. FMN serves as cofactor.

It is found in the cell inner membrane. Functionally, part of a membrane-bound complex that couples electron transfer with translocation of ions across the membrane. This Aliivibrio fischeri (strain MJ11) (Vibrio fischeri) protein is Ion-translocating oxidoreductase complex subunit G.